A 470-amino-acid polypeptide reads, in one-letter code: Glutamate--tRNA ligase (470 aa).

The short motif at 9–19 is the 'HIGH' region element; sequence PSPTGYLHVGG. The short motif at 236-240 is the 'KMSKS' region element; that stretch reads RLSKR. Lys239 provides a ligand contact to ATP.

The protein belongs to the class-I aminoacyl-tRNA synthetase family. Glutamate--tRNA ligase type 1 subfamily. Monomer.

Its subcellular location is the cytoplasm. The catalysed reaction is tRNA(Glu) + L-glutamate + ATP = L-glutamyl-tRNA(Glu) + AMP + diphosphate. Catalyzes the attachment of glutamate to tRNA(Glu) in a two-step reaction: glutamate is first activated by ATP to form Glu-AMP and then transferred to the acceptor end of tRNA(Glu). The polypeptide is Glutamate--tRNA ligase (Colwellia psychrerythraea (strain 34H / ATCC BAA-681) (Vibrio psychroerythus)).